The following is a 272-amino-acid chain: Lyso-glycine lipid O-acyltransferase (272 aa).

It belongs to the O-acyltransferase GlsA family.

The enzyme catalyses a lyso-glycine lipid + a fatty acyl-[ACP] = a glycine lipid + holo-[ACP]. It carries out the reaction N-[(3R)-3-hydroxyhexadecanoyl]-glycine + hexadecanoyl-[ACP] = N-[(3R)-3-(hexadecanoyloxy)hexadecanoyl]-glycine + holo-[ACP]. Its pathway is lipid metabolism. Is involved in the production of glycine lipids (GL), which are phosphorus-free membrane lipids important for fitness during growth of the human gut bacterium B.thetaiotaomicron in vivo and in vitro. Catalyzes the second step of GL biosynthesis, i.e. the O-acylation of the hydroxyl group of lyso-glycine lipids, resulting in the production of the mature diacylated glycine lipids. The sequence is that of Lyso-glycine lipid O-acyltransferase from Bacteroides thetaiotaomicron (strain ATCC 29148 / DSM 2079 / JCM 5827 / CCUG 10774 / NCTC 10582 / VPI-5482 / E50).